A 62-amino-acid chain; its full sequence is Chromatin protein Cren7 1 (62 aa).

Belongs to the Cren7 family. Monomer. In terms of processing, methylated at multiple sites, to varying extents.

The protein localises to the chromosome. It localises to the cytoplasm. A chromatin protein, binds double-stranded DNA without sequence specificity. Constrains negative DNA supercoils. The sequence is that of Chromatin protein Cren7 1 (cren7-1) from Hyperthermus butylicus (strain DSM 5456 / JCM 9403 / PLM1-5).